The sequence spans 154 residues: D-aminoacyl-tRNA deacylase (154 aa).

A Gly-cisPro motif, important for rejection of L-amino acids motif is present at residues 142–143; that stretch reads GP.

Belongs to the DTD family. As to quaternary structure, homodimer.

Its subcellular location is the cytoplasm. The enzyme catalyses glycyl-tRNA(Ala) + H2O = tRNA(Ala) + glycine + H(+). It catalyses the reaction a D-aminoacyl-tRNA + H2O = a tRNA + a D-alpha-amino acid + H(+). Functionally, an aminoacyl-tRNA editing enzyme that deacylates mischarged D-aminoacyl-tRNAs. Also deacylates mischarged glycyl-tRNA(Ala), protecting cells against glycine mischarging by AlaRS. Acts via tRNA-based rather than protein-based catalysis; rejects L-amino acids rather than detecting D-amino acids in the active site. By recycling D-aminoacyl-tRNA to D-amino acids and free tRNA molecules, this enzyme counteracts the toxicity associated with the formation of D-aminoacyl-tRNA entities in vivo and helps enforce protein L-homochirality. The protein is D-aminoacyl-tRNA deacylase of Acidovorax sp. (strain JS42).